Reading from the N-terminus, the 1017-residue chain is Multiple C2 domain and transmembrane region protein 14 (1017 aa).

Positions 1 to 110 constitute a C2 1 domain; the sequence is MADNVLRKLI…ASAGSETLVY (110 aa). Positions 139-231 are disordered; that stretch reads AAPAATEPKP…PAEVKNPPIP (93 aa). A compositionally biased stretch (low complexity) spans 141-153; sequence PAATEPKPEAAAA. The segment covering 154–213 has biased composition (basic and acidic residues); the sequence is TEEKPPEIAKAEDGKKETEAAKTEEKKEGDKKEEEKPKEEAKPDEKKPDAPPDTKAKKPD. Over residues 217–231 the composition is skewed to pro residues; sequence APPPPPAEVKNPPIP. C2 domains follow at residues 258 to 387, 420 to 554, and 587 to 714; these read DLEL…PQWY, DSGG…SRWF, and VTSD…LNSY. The Ca(2+) site is built by aspartate 296, asparagine 299, aspartate 352, threonine 355, and glutamate 359. 2 helical membrane passes run 851 to 871 and 957 to 977; these read VAIVLCPHLVLPTVFMYAFLI and ATCIFVVFCLFASFLFYIVPF.

The protein belongs to the MCTP family. It depends on Ca(2+) as a cofactor. In terms of tissue distribution, expressed in incipient leaf primordia and in roots meristems. Observed in flowers.

It is found in the membrane. The protein localises to the vesicle. The protein resides in the golgi apparatus membrane. May function as a signaling molecule by regulating the trafficking of other regulators. This chain is Multiple C2 domain and transmembrane region protein 14, found in Arabidopsis thaliana (Mouse-ear cress).